A 119-amino-acid chain; its full sequence is uncharacterized protein (119 aa).

This is an uncharacterized protein from Escherichia coli O157:H7.